Reading from the N-terminus, the 359-residue chain is Protein mab-21-like 2 (359 aa).

Belongs to the mab-21 family.

It is found in the nucleus. Its subcellular location is the cytoplasm. Its function is as follows. Required for several aspects of embryonic development including normal development of the eye. This is Protein mab-21-like 2 (mab21l2) from Xenopus tropicalis (Western clawed frog).